Here is a 266-residue protein sequence, read N- to C-terminus: Probable catechol O-methyltransferase 1 (266 aa).

S-adenosyl-L-methionine is bound by residues isoleucine 56, glutamate 78, serine 86, glutamate 106, valine 107, alanine 135, and aspartate 162. Aspartate 162 contacts Mg(2+). Lysine 165 contacts substrate. Aspartate 190 and asparagine 191 together coordinate Mg(2+). Position 191 (asparagine 191) interacts with substrate.

It belongs to the class I-like SAM-binding methyltransferase superfamily. Cation-dependent O-methyltransferase family. Mg(2+) serves as cofactor.

It localises to the cytoplasm. It is found in the nucleus. It catalyses the reaction a catechol + S-adenosyl-L-methionine = a guaiacol + S-adenosyl-L-homocysteine + H(+). The sequence is that of Probable catechol O-methyltransferase 1 from Schizosaccharomyces pombe (strain 972 / ATCC 24843) (Fission yeast).